Reading from the N-terminus, the 951-residue chain is Serine/threonine-protein phosphatase 4 regulatory subunit 1 (951 aa).

HEAT repeat units follow at residues 26–63, 65–81, 82–119, 127–164, 168–206, 208–246, 248–285, and 287–324; these read ESDV…VFNR, MVAR…CDDE, RDCI…FCQE, AFSK…QELI, DVET…MVGK, ITER…VVGQ, ATEE…ATCQ, and IRRT…TFAN. 3 disordered regions span residues 325 to 377, 411 to 451, and 474 to 499; these read PSSS…HSSA, SESP…PLDQ, and QQDP…GPPN. Residues 332-365 show a composition bias toward basic and acidic residues; that stretch reads FKDESKSSEDSSAEDKDRMRDNDVVEEEHRRPED. 2 stretches are compositionally biased toward polar residues: residues 411-421 and 430-445; these read SESPQEAASND and NSKS…SSPE. Residues 474 to 487 show a composition bias toward basic and acidic residues; that stretch reads QQDPEERLSPERTG. One copy of the HEAT 9 repeat lies at 506–543; it reads KELEEMIENLEPHMDDPDVKAQVDVLSAALRASSLDAH. Residues 590–612 are disordered; that stretch reads DYVHGGADVSPGDGFSPDEDRRP. 3 HEAT repeats span residues 699 to 735, 800 to 838, and 862 to 899; these read LTAA…LLHI, WISY…RCPK, and QFAV…EKEY. Ser-936 carries the phosphoserine modification.

In terms of assembly, serine/threonine-protein phosphatase 4 (PP4) occurs in different assemblies of the catalytic and one or more regulatory subunits. Component of the PP4 complex PPP4C-PPP4R1. Interacts with HDAC3.

In terms of biological role, regulatory subunit of serine/threonine-protein phosphatase 4. May play a role in regulation of cell division in renal glomeruli. The PPP4C-PPP4R1 PP4 complex may play a role in dephosphorylation and regulation of HDAC3. Plays a role in the inhibition of TNF-induced NF-kappa-B activation by regulating the dephosphorylation of TRAF2. The sequence is that of Serine/threonine-protein phosphatase 4 regulatory subunit 1 (Ppp4r1) from Mus musculus (Mouse).